A 328-amino-acid polypeptide reads, in one-letter code: Malate dehydrogenase (328 aa).

11-17 (GAAGQIG) contributes to the NAD(+) binding site. Substrate contacts are provided by arginine 94 and arginine 100. Residues asparagine 107, glutamine 114, and 131 to 133 (VGN) each bind NAD(+). Asparagine 133 and arginine 164 together coordinate substrate. The active-site Proton acceptor is the histidine 189.

Belongs to the LDH/MDH superfamily. MDH type 2 family.

It catalyses the reaction (S)-malate + NAD(+) = oxaloacetate + NADH + H(+). In terms of biological role, catalyzes the reversible oxidation of malate to oxaloacetate. The sequence is that of Malate dehydrogenase from Xanthomonas oryzae pv. oryzae (strain PXO99A).